The chain runs to 209 residues: Ribosomal RNA large subunit methyltransferase E (209 aa).

S-adenosyl-L-methionine-binding residues include glycine 63, tryptophan 65, aspartate 83, aspartate 99, and aspartate 124. Lysine 164 acts as the Proton acceptor in catalysis.

Belongs to the class I-like SAM-binding methyltransferase superfamily. RNA methyltransferase RlmE family.

The protein resides in the cytoplasm. The catalysed reaction is uridine(2552) in 23S rRNA + S-adenosyl-L-methionine = 2'-O-methyluridine(2552) in 23S rRNA + S-adenosyl-L-homocysteine + H(+). Functionally, specifically methylates the uridine in position 2552 of 23S rRNA at the 2'-O position of the ribose in the fully assembled 50S ribosomal subunit. The sequence is that of Ribosomal RNA large subunit methyltransferase E from Shewanella putrefaciens (strain CN-32 / ATCC BAA-453).